The chain runs to 173 residues: CDP-archaeol synthase (173 aa).

5 consecutive transmembrane segments (helical) span residues 15–35, 59–79, 84–104, 118–138, and 142–162; these read GLWFILPAYIANLSACLFGGG, GFIVGVLAGAVVGLGEGLVVG, AGDGFILGLGAMAGDAVGSFV, VLDQLDFFVGAVLLYYLVYGW, and GWVLVGLAILTLALHWLTNVI.

This sequence belongs to the CDP-archaeol synthase family. Mg(2+) is required as a cofactor.

It is found in the cell membrane. The catalysed reaction is 2,3-bis-O-(geranylgeranyl)-sn-glycerol 1-phosphate + CTP + H(+) = CDP-2,3-bis-O-(geranylgeranyl)-sn-glycerol + diphosphate. The protein operates within membrane lipid metabolism; glycerophospholipid metabolism. Its function is as follows. Catalyzes the formation of CDP-2,3-bis-(O-geranylgeranyl)-sn-glycerol (CDP-archaeol) from 2,3-bis-(O-geranylgeranyl)-sn-glycerol 1-phosphate (DGGGP) and CTP. This reaction is the third ether-bond-formation step in the biosynthesis of archaeal membrane lipids. In Methanopyrus kandleri (strain AV19 / DSM 6324 / JCM 9639 / NBRC 100938), this protein is CDP-archaeol synthase.